The chain runs to 74 residues: Large ribosomal subunit protein eL38B (74 aa).

It belongs to the eukaryotic ribosomal protein eL38 family. As to quaternary structure, component of the large ribosomal subunit (LSU). Mature yeast ribosomes consist of a small (40S) and a large (60S) subunit. The 40S small subunit contains 1 molecule of ribosomal RNA (18S rRNA) and at least 33 different proteins. The large 60S subunit contains 3 rRNA molecules (25S, 5.8S and 5S rRNA) and at least 46 different proteins.

The protein localises to the cytoplasm. Its function is as follows. Component of the ribosome, a large ribonucleoprotein complex responsible for the synthesis of proteins in the cell. The small ribosomal subunit (SSU) binds messenger RNAs (mRNAs) and translates the encoded message by selecting cognate aminoacyl-transfer RNA (tRNA) molecules. The large subunit (LSU) contains the ribosomal catalytic site termed the peptidyl transferase center (PTC), which catalyzes the formation of peptide bonds, thereby polymerizing the amino acids delivered by tRNAs into a polypeptide chain. The nascent polypeptides leave the ribosome through a tunnel in the LSU and interact with protein factors that function in enzymatic processing, targeting, and the membrane insertion of nascent chains at the exit of the ribosomal tunnel. In Schizosaccharomyces pombe (strain 972 / ATCC 24843) (Fission yeast), this protein is Large ribosomal subunit protein eL38B (rpl3802).